The primary structure comprises 209 residues: Kynurenine formamidase (209 aa).

Tryptophan 20 is a substrate binding site. The Zn(2+) site is built by histidine 50, histidine 54, and aspartate 56. Catalysis depends on histidine 60, which acts as the Proton donor/acceptor. Residues histidine 161 and glutamate 173 each contribute to the Zn(2+) site.

Belongs to the Cyclase 1 superfamily. KynB family. In terms of assembly, homodimer. The cofactor is Zn(2+).

It catalyses the reaction N-formyl-L-kynurenine + H2O = L-kynurenine + formate + H(+). It functions in the pathway amino-acid degradation; L-tryptophan degradation via kynurenine pathway; L-kynurenine from L-tryptophan: step 2/2. Its function is as follows. Catalyzes the hydrolysis of N-formyl-L-kynurenine to L-kynurenine, the second step in the kynurenine pathway of tryptophan degradation. The chain is Kynurenine formamidase from Bacillus thuringiensis subsp. konkukian (strain 97-27).